A 194-amino-acid polypeptide reads, in one-letter code: Molybdenum cofactor guanylyltransferase (194 aa).

Residues 12–14 (LAG), K25, N53, D70, and D100 each bind GTP. D100 contributes to the Mg(2+) binding site.

It belongs to the MobA family. In terms of assembly, monomer. Mg(2+) is required as a cofactor.

It localises to the cytoplasm. The catalysed reaction is Mo-molybdopterin + GTP + H(+) = Mo-molybdopterin guanine dinucleotide + diphosphate. Functionally, transfers a GMP moiety from GTP to Mo-molybdopterin (Mo-MPT) cofactor (Moco or molybdenum cofactor) to form Mo-molybdopterin guanine dinucleotide (Mo-MGD) cofactor. The protein is Molybdenum cofactor guanylyltransferase of Aliivibrio fischeri (strain MJ11) (Vibrio fischeri).